We begin with the raw amino-acid sequence, 322 residues long: Cysteine protease YopT (322 aa).

Active-site residues include cysteine 139, histidine 258, and aspartate 274.

It belongs to the peptidase C58 family. As to quaternary structure, interacts with human ARHA.

The protein localises to the secreted. Cysteine protease, which is translocated into infected cells and plays a central role in pathogenesis by cleaving the C-terminus end of the human small GTPase RhoA/ARHA, a regulator of cytoskeleton. Once cleaved, ARHA loses its lipid modification, and is released from the cell membrane, leading to the subsequent disruption of actin cytoskeleton of the host cell. This Yersinia pestis protein is Cysteine protease YopT (yopT).